The sequence spans 320 residues: Cytochrome f (320 aa).

The signal sequence occupies residues Met1 to Ala35. The heme site is built by Tyr36, Cys56, Cys59, and His60. The helical transmembrane segment at Val286–Lys306 threads the bilayer.

The protein belongs to the cytochrome f family. The 4 large subunits of the cytochrome b6-f complex are cytochrome b6, subunit IV (17 kDa polypeptide, petD), cytochrome f and the Rieske protein, while the 4 small subunits are PetG, PetL, PetM and PetN. The complex functions as a dimer. Heme serves as cofactor.

Its subcellular location is the plastid. It localises to the chloroplast thylakoid membrane. Component of the cytochrome b6-f complex, which mediates electron transfer between photosystem II (PSII) and photosystem I (PSI), cyclic electron flow around PSI, and state transitions. This chain is Cytochrome f, found in Saccharum hybrid (Sugarcane).